The sequence spans 371 residues: Cytochrome b (371 aa).

The next 4 membrane-spanning stretches (helical) occupy residues phenylalanine 25–isoleucine 45, tryptophan 69–isoleucine 90, tryptophan 105–leucine 125, and phenylalanine 170–isoleucine 190. 2 residues coordinate heme b: histidine 75 and histidine 89. Residues histidine 174 and histidine 188 each contribute to the heme b site. A ubiquinone is bound at residue histidine 193. The next 4 helical transmembrane spans lie at tyrosine 218–threonine 238, leucine 280–histidine 300, leucine 312–serine 332, and phenylalanine 339–proline 358.

It belongs to the cytochrome b family. The cytochrome bc1 complex contains 3 respiratory subunits (MT-CYB, CYC1 and UQCRFS1), 2 core proteins (UQCRC1 and UQCRC2) and probably 6 low-molecular weight proteins. Heme b is required as a cofactor.

It is found in the mitochondrion inner membrane. Component of the ubiquinol-cytochrome c reductase complex (complex III or cytochrome b-c1 complex) that is part of the mitochondrial respiratory chain. The b-c1 complex mediates electron transfer from ubiquinol to cytochrome c. Contributes to the generation of a proton gradient across the mitochondrial membrane that is then used for ATP synthesis. The protein is Cytochrome b (MT-CYB) of Sinomicrurus macclellandi (Macclelland's coral snake).